The sequence spans 309 residues: Taste receptor type 2 member 8 (309 aa).

Topologically, residues 1-7 are extracellular; that stretch reads MFSPADN. Residues 8–28 form a helical membrane-spanning segment; it reads IFIILITGEFIIGILGNGYIG. Residues 29-50 are Cytoplasmic-facing; sequence LVNWIDWIKKKKISTIDCILTN. A helical membrane pass occupies residues 51–71; it reads LVISRICLISVMVVNGIVIVL. Residues 72–82 are Extracellular-facing; that stretch reads YPDVYTKTKLQ. A helical transmembrane segment spans residues 83–103; it reads IVICTFWTFANYLNMWFTACL. Over 104-131 the chain is Cytoplasmic; it reads NVFYSLKVANSSHPLFLWLKRKIDMVVR. The chain crosses the membrane as a helical span at residues 132 to 152; that stretch reads WILLGCFAISLLVSLIIATVL. At 153 to 184 the chain is on the extracellular side; sequence SHDYRFHAIAKHKRNVTEMFHVSKMPYFEPLT. The N-linked (GlcNAc...) asparagine glycan is linked to Asn167. The helical transmembrane segment at 185 to 205 threads the bilayer; the sequence is LFNLLAIVPFIVSLMSFFLLV. Over 206–239 the chain is Cytoplasmic; it reads RSLWRHTKQIKLYATGGRDPSTEAHVRAIKTMTL. Residues 240–260 form a helical membrane-spanning segment; it reads LIFFFFLYYITSLLVXFSYLI. The Extracellular portion of the chain corresponds to 261-266; the sequence is TNYKLA. Residues 267-287 traverse the membrane as a helical segment; it reads MAFGEIVAILYPSGHSLILII. Residues 288 to 309 are Cytoplasmic-facing; the sequence is LNNKLRQASVRMLTCRKIACVT.

It belongs to the G-protein coupled receptor T2R family.

It localises to the membrane. Functionally, receptor that may play a role in the perception of bitterness and is gustducin-linked. May play a role in sensing the chemical composition of the gastrointestinal content. The activity of this receptor may stimulate alpha gustducin, mediate PLC-beta-2 activation and lead to the gating of TRPM5. The protein is Taste receptor type 2 member 8 (TAS2R8) of Papio hamadryas (Hamadryas baboon).